The sequence spans 238 residues: ATP synthase subunit a (238 aa).

5 consecutive transmembrane segments (helical) span residues 17 to 37, 75 to 95, 112 to 132, 179 to 199, and 202 to 222; these read LSDM…AVAA, FLTL…LGLP, DATV…YYGV, ILLG…AVGA, and FPIM…AFIF.

The protein belongs to the ATPase A chain family. As to quaternary structure, F-type ATPases have 2 components, CF(1) - the catalytic core - and CF(0) - the membrane proton channel. CF(1) has five subunits: alpha(3), beta(3), gamma(1), delta(1), epsilon(1). CF(0) has three main subunits: a(1), b(2) and c(9-12). The alpha and beta chains form an alternating ring which encloses part of the gamma chain. CF(1) is attached to CF(0) by a central stalk formed by the gamma and epsilon chains, while a peripheral stalk is formed by the delta and b chains.

The protein localises to the cell membrane. Its function is as follows. Key component of the proton channel; it plays a direct role in the translocation of protons across the membrane. This Bacillus sp. (strain PS3) protein is ATP synthase subunit a.